We begin with the raw amino-acid sequence, 556 residues long: 2-succinyl-5-enolpyruvyl-6-hydroxy-3-cyclohexene-1-carboxylate synthase (556 aa).

It belongs to the TPP enzyme family. MenD subfamily. As to quaternary structure, homodimer. Requires Mg(2+) as cofactor. It depends on Mn(2+) as a cofactor. The cofactor is thiamine diphosphate.

The catalysed reaction is isochorismate + 2-oxoglutarate + H(+) = 5-enolpyruvoyl-6-hydroxy-2-succinyl-cyclohex-3-ene-1-carboxylate + CO2. Its pathway is quinol/quinone metabolism; 1,4-dihydroxy-2-naphthoate biosynthesis; 1,4-dihydroxy-2-naphthoate from chorismate: step 2/7. It participates in quinol/quinone metabolism; menaquinone biosynthesis. In terms of biological role, catalyzes the thiamine diphosphate-dependent decarboxylation of 2-oxoglutarate and the subsequent addition of the resulting succinic semialdehyde-thiamine pyrophosphate anion to isochorismate to yield 2-succinyl-5-enolpyruvyl-6-hydroxy-3-cyclohexene-1-carboxylate (SEPHCHC). In Shigella boydii serotype 18 (strain CDC 3083-94 / BS512), this protein is 2-succinyl-5-enolpyruvyl-6-hydroxy-3-cyclohexene-1-carboxylate synthase.